The primary structure comprises 340 residues: Latency-related protein 1 (340 aa).

2 disordered regions span residues 13 to 96 (AALW…PNRQ) and 254 to 340 (RLPG…PPRP). 2 consecutive repeat copies span residues 27–43 (PTPTHPHSHAPPLPRTP) and 59–75 (PTPTHPHSHAPPLPRTP). The interval 27-75 (PTPTHPHSHAPPLPRTPTPSHPHSRAPPLPRAPTPTHPHSHAPPLPRTP) is 2 X 17 AA repeats. Over residues 35–73 (HAPPLPRTPTPSHPHSRAPPLPRAPTPTHPHSHAPPLPR) the composition is skewed to pro residues. Residues 287 to 307 (ARGGGSGGGRGPGGGRGGPRG) show a composition bias toward gly residues. Positions 308–326 (SRGRGGRGRGGRGGGRRGR) are enriched in basic residues.

The sequence is that of Latency-related protein 1 from Human herpesvirus 1 (strain F) (HHV-1).